Reading from the N-terminus, the 38-residue chain is 4 kDa defensin (38 aa).

Cystine bridges form between cysteine 4-cysteine 25, cysteine 11-cysteine 33, and cysteine 15-cysteine 35.

Belongs to the invertebrate defensin family. Type 2 subfamily.

The protein localises to the secreted. Its function is as follows. Dual-function peptide with antimicrobial and potassium channel-blocking activities. Shows inhibitory activity against Gram-positive bacteria such as M.luteus, S.aureus, B.subtilis, and M.luteus as well as methicillin-resistant S.aureus (MIC=0.1-20 uM). Does not act on bacteria by disrupting membranes. Also moderately inhibits Kv1.1/KCNA1, Kv1.2/KCNA2, and Kv1.3/KCNA3 potassium channels. Inhibits potassium channels by interacting with the pore region. Does not show hemolytic activity. This Leiurus hebraeus (Hebrew deathstalker scorpion) protein is 4 kDa defensin.